The primary structure comprises 125 residues: Protein Bouncer (125 aa).

The first 18 residues, M1–P18, serve as a signal peptide directing secretion. Intrachain disulfides connect C23/C48, C26/C35, C42/C66, C72/C91, and C92/C97. Positions C23 to N98 constitute a UPAR/Ly6 domain. N32 carries an N-linked (GlcNAc...) asparagine glycan. N-linked (GlcNAc...) asparagine glycosylation is present at N84. The GPI-anchor amidated asparagine moiety is linked to residue N98. Residues S99 to L125 constitute a propeptide, removed in mature form.

It belongs to the SPACA4/bouncer family. As to quaternary structure, interacts with spermatocyte complex composed of izumo1, spaca6 and tmem81. Post-translationally, N-glycosylated. Highly expressed in oocytes. Not expressed in testis.

Its subcellular location is the cell membrane. In terms of biological role, oocyte-expressed fertilization factor that mediates sperm-egg binding and is essential for sperm entry into the egg. Necessary and sufficient to mediate species-specific gamete recognition and fertilization, which is essential for vertebrate species performing external fertilization. External fertilization cannot guarantee that only conspecific sperm reaches the egg by precopulatory mate choice: proteins such as Bouncer can therefore support the selection of conspecific sperm. The polypeptide is Protein Bouncer (Danio rerio (Zebrafish)).